Reading from the N-terminus, the 351-residue chain is Nicotinate-nucleotide--dimethylbenzimidazole phosphoribosyltransferase (351 aa).

Residue Glu317 is the Proton acceptor of the active site.

It belongs to the CobT family.

The catalysed reaction is 5,6-dimethylbenzimidazole + nicotinate beta-D-ribonucleotide = alpha-ribazole 5'-phosphate + nicotinate + H(+). It functions in the pathway nucleoside biosynthesis; alpha-ribazole biosynthesis; alpha-ribazole from 5,6-dimethylbenzimidazole: step 1/2. Functionally, catalyzes the synthesis of alpha-ribazole-5'-phosphate from nicotinate mononucleotide (NAMN) and 5,6-dimethylbenzimidazole (DMB). The chain is Nicotinate-nucleotide--dimethylbenzimidazole phosphoribosyltransferase from Pseudomonas putida (strain ATCC 47054 / DSM 6125 / CFBP 8728 / NCIMB 11950 / KT2440).